The sequence spans 526 residues: MIENIYTSRILILNFGSQYAQLLVRRVRELGVYCELRAWDITEAQIREFAPNGIILSGGPESTLTIDSPRASPYIFMAGVPVLGVCYGMQTIAIQLGGKVNQDMLRREFGYAQVVIIADSPLTRNIQDLINNNQPILNVWMSHSDNITSIPPDFIIVGRTTTCPFAIIANEKKRFYGIQFHPEVTHTCQGHNILKRFVLDICSCQGRWTPNNIKENIINHIKEQVGKENVVLGLSGGVDSTVTAMLLHYAIGVNLTCIFIDNGLLRYNEASNIREIFSKNLSLNIIYVRSEDRFLRALAGIYNPEEKRKIIGRLFSEIFEEQARSLTKTATWLAQGTIYPDIIESAISHVSLTNVIKSHHNVGGLPNTLNLKLIEPLKNLFKDEVRKIGLELGLPFHMLYRHPFPGPGLGIRILGEVKKEDCDLLRKADLIFIEELYKAKLYYKVSQAFAVLLPIYSVGVMGDSRKYERVISLRAVETIDFMTANWSHLSYDFLELVSNRIINEIDGISRVVYDISGKPPATIEWE.

The Glutamine amidotransferase type-1 domain occupies 9 to 207; the sequence is RILILNFGSQ…VLDICSCQGR (199 aa). The active-site Nucleophile is the Cys86. Active-site residues include His181 and Glu183. The 194-residue stretch at 208 to 401 folds into the GMPS ATP-PPase domain; sequence WTPNNIKENI…LGLPFHMLYR (194 aa). Position 235 to 241 (235 to 241) interacts with ATP; sequence SGGVDST.

Homodimer.

It catalyses the reaction XMP + L-glutamine + ATP + H2O = GMP + L-glutamate + AMP + diphosphate + 2 H(+). It functions in the pathway purine metabolism; GMP biosynthesis; GMP from XMP (L-Gln route): step 1/1. Its function is as follows. Catalyzes the synthesis of GMP from XMP. This Baumannia cicadellinicola subsp. Homalodisca coagulata protein is GMP synthase [glutamine-hydrolyzing].